We begin with the raw amino-acid sequence, 90 residues long: Sec-independent protein translocase protein TatA (90 aa).

Residues 1–21 form a helical membrane-spanning segment; the sequence is MGSMSIWHWVIVAVIVMLLFG. Residues 44–90 form a disordered region; it reads AEDETPPAVQAAPPPAEPVRTIPHATETSPGTAIPASHLPGGERKPV.

It belongs to the TatA/E family. As to quaternary structure, the Tat system comprises two distinct complexes: a TatABC complex, containing multiple copies of TatA, TatB and TatC subunits, and a separate TatA complex, containing only TatA subunits. Substrates initially bind to the TatABC complex, which probably triggers association of the separate TatA complex to form the active translocon.

The protein localises to the cell inner membrane. Its function is as follows. Part of the twin-arginine translocation (Tat) system that transports large folded proteins containing a characteristic twin-arginine motif in their signal peptide across membranes. TatA could form the protein-conducting channel of the Tat system. The sequence is that of Sec-independent protein translocase protein TatA from Methylobacterium radiotolerans (strain ATCC 27329 / DSM 1819 / JCM 2831 / NBRC 15690 / NCIMB 10815 / 0-1).